The sequence spans 868 residues: Transcription factor pynR (868 aa).

The zn(2)-C6 fungal-type DNA-binding region spans 11-37 (CTFCRTRKIACSGERICNACRSRSIEC). Disordered regions lie at residues 51-88 (NKTT…TSAV), 662-683 (LSGS…LDLS), 715-761 (SGIP…ASDL), and 829-868 (GMGE…GMSN). Composition is skewed to low complexity over residues 663–683 (SGSR…LDLS) and 715–727 (SGIP…SISH).

Its subcellular location is the nucleus. Functionally, transcription factor that regulates the expression of the gene cluster that mediates the biosynthesis of pyranonigrins, a family of antioxidative compounds. The polypeptide is Transcription factor pynR (Aspergillus niger (strain ATCC MYA-4892 / CBS 513.88 / FGSC A1513)).